Here is a 385-residue protein sequence, read N- to C-terminus: Glucose-fructose oxidoreductase domain-containing protein 2 (385 aa).

The first 25 residues, 1–25 (MKMLPGVGVFGTGSSARVLVPLLRA), serve as a signal peptide directing secretion.

The protein belongs to the Gfo/Idh/MocA family.

Its subcellular location is the secreted. It localises to the extracellular space. It is found in the extracellular matrix. In terms of biological role, promotes matrix assembly. This Homo sapiens (Human) protein is Glucose-fructose oxidoreductase domain-containing protein 2 (GFOD2).